Reading from the N-terminus, the 513-residue chain is Maturase K (513 aa).

It belongs to the intron maturase 2 family. MatK subfamily.

It is found in the plastid. Its subcellular location is the chloroplast. Usually encoded in the trnK tRNA gene intron. Probably assists in splicing its own and other chloroplast group II introns. The chain is Maturase K from Pinus parviflora (Japanese white pine).